The following is a 714-amino-acid chain: DNA ligase (714 aa).

Residues 40–44 (DADYD), 90–91 (SL), and Glu-124 contribute to the NAD(+) site. The active-site N6-AMP-lysine intermediate is Lys-126. The NAD(+) site is built by Arg-147, Glu-183, Lys-304, and Lys-328. Residues Cys-420, Cys-423, Cys-438, and Cys-444 each contribute to the Zn(2+) site. Positions 634–714 (TRDSEVSGKT…EWAAIVAAAG (81 aa)) constitute a BRCT domain.

This sequence belongs to the NAD-dependent DNA ligase family. LigA subfamily. The cofactor is Mg(2+). Mn(2+) is required as a cofactor.

It carries out the reaction NAD(+) + (deoxyribonucleotide)n-3'-hydroxyl + 5'-phospho-(deoxyribonucleotide)m = (deoxyribonucleotide)n+m + AMP + beta-nicotinamide D-nucleotide.. Its function is as follows. DNA ligase that catalyzes the formation of phosphodiester linkages between 5'-phosphoryl and 3'-hydroxyl groups in double-stranded DNA using NAD as a coenzyme and as the energy source for the reaction. It is essential for DNA replication and repair of damaged DNA. The protein is DNA ligase of Sphingopyxis alaskensis (strain DSM 13593 / LMG 18877 / RB2256) (Sphingomonas alaskensis).